Here is a 461-residue protein sequence, read N- to C-terminus: Vitamin K-dependent protein C (461 aa).

Residues 1–18 form the signal peptide; it reads MWQFRIFLLFASTWGISG. A propeptide spanning residues 19–41 is cleaved from the precursor; it reads VSAHPDPVFSSSEGAHQVLRVRR. Residues 42–87 enclose the Gla domain; the sequence is ANSFLEEVRAGSLERECMEEICDFEEAQEIFQNVEDTLAFWIKYFD. 4-carboxyglutamate is present on residues E47, E48, E55, E57, E60, E61, E66, E67, E70, and E76. An intrachain disulfide couples C58 to C63. Disulfide bonds link C91/C110, C100/C105, C104/C119, C121/C130, C139/C150, C146/C159, C161/C174, C182/C320, and C239/C255. 2 EGF-like domains span residues 96–131 and 135–175; these read LDHQCDSPCCGHGTCIDGLGGFSCSCDKGWEGRFCQ and GFQD…MHCR. (3R)-3-hydroxyaspartate is present on D112. In terms of domain architecture, Peptidase S1 spans 213–450; sequence IVNGTLTKQG…YLKWIHSYIG (238 aa). N215 carries N-linked (GlcNAc...) asparagine glycosylation. The active-site Charge relay system is the H254. An N-linked (GlcNAc...) asparagine glycan is attached at N291. D300 functions as the Charge relay system in the catalytic mechanism. The N-linked (GlcNAc...) asparagine glycan is linked to N355. Cystine bridges form between C373/C387 and C398/C426. The Charge relay system role is filled by S402.

It belongs to the peptidase S1 family. As to quaternary structure, synthesized as a single chain precursor, which is cleaved into a light chain and a heavy chain held together by a disulfide bond. The enzyme is then activated by thrombin, which cleaves a tetradecapeptide from the amino end of the heavy chain; this reaction, which occurs at the surface of endothelial cells, is strongly promoted by thrombomodulin. The vitamin K-dependent, enzymatic carboxylation of some Glu residues allows the modified protein to bind calcium. In terms of processing, the iron and 2-oxoglutarate dependent 3-hydroxylation of aspartate and asparagine is (R) stereospecific within EGF domains. As to expression, plasma; synthesized in the liver.

The protein resides in the secreted. It localises to the golgi apparatus. Its subcellular location is the endoplasmic reticulum. It catalyses the reaction Degradation of blood coagulation factors Va and VIIIa.. Functionally, protein C is a vitamin K-dependent serine protease that regulates blood coagulation by inactivating factors Va and VIIIa in the presence of calcium ions and phospholipids. Exerts a protective effect on the endothelial cell barrier function. This is Vitamin K-dependent protein C (Proc) from Rattus norvegicus (Rat).